The chain runs to 338 residues: Large ribosomal subunit protein uL10 (338 aa).

Positions 309–327 (KAEVEEAKEEEKEEKKEEA) are enriched in basic and acidic residues. Positions 309-338 (KAEVEEAKEEEKEEKKEEAAPAAAGLGLLF) are disordered.

It belongs to the universal ribosomal protein uL10 family. As to quaternary structure, part of the 50S ribosomal subunit. Forms part of the ribosomal stalk which helps the ribosome interact with GTP-bound translation factors. Forms a heptameric L10(L12)2(L12)2(L12)2 complex, where L10 forms an elongated spine to which the L12 dimers bind in a sequential fashion.

Functionally, forms part of the ribosomal stalk, playing a central role in the interaction of the ribosome with GTP-bound translation factors. The polypeptide is Large ribosomal subunit protein uL10 (Methanothermococcus thermolithotrophicus (Methanococcus thermolithotrophicus)).